The primary structure comprises 229 residues: Cytidylate kinase (229 aa).

Residue 12–20 (GPSGAGKGT) coordinates ATP.

The protein belongs to the cytidylate kinase family. Type 1 subfamily.

The protein localises to the cytoplasm. The enzyme catalyses CMP + ATP = CDP + ADP. It catalyses the reaction dCMP + ATP = dCDP + ADP. The chain is Cytidylate kinase from Pseudomonas paraeruginosa (strain DSM 24068 / PA7) (Pseudomonas aeruginosa (strain PA7)).